Consider the following 298-residue polypeptide: MENYSGAVVNNKYVETKSCEYRLTNNEMPIKLQFPSYLEQKTVQIMGKCMKVDHAVIEYRNQVPFNAKGTVIVTIRDTRLSYEQAAQAAFTFPIACNVDLHYFSSSFFSLKDETPWEIVYKVEDSNVIDGTTFAQIKAKLKLSSAKHSTDIRFKPPTINILSKDYTEECVDFWSVEKPKPIRRMLNPGPNQGPYPISGHRPIMLQPGETWATRSSIGRSSSMRYTNNDRPSILDNTSASDADYPLRHLHKLPEASLDPGDSVSQSHSNAMSKREIEDIIETTISKCLISQRSNVNKAL.

Belongs to the begomovirus movement protein BC1 family. In terms of assembly, binds to dimeric supercoiled plasmid DNA. Phosphorylated.

The protein localises to the host cell membrane. It is found in the host microsome membrane. The protein resides in the host endoplasmic reticulum membrane. In terms of biological role, transports viral genome to neighboring plant cells directly through plasmosdesmata, without any budding. The movement protein allows efficient cell to cell propagation, by bypassing the host cell wall barrier. Begomovirus genome is shuttled out of nucleus by Nuclear shuttle protein (NSP) and the movement protein transports the DNA-NSP complex to cell plasmodesmata and facilitates further movement across the cell wall. The chain is Movement protein BC1 from Mungbean yellow mosaic virus (strain Vigna) (MYMV).